Consider the following 95-residue polypeptide: High mobility group nucleosome-binding domain-containing protein 3 (95 aa).

3 stretches are compositionally biased toward basic and acidic residues: residues 1-25 (MPKRKSPENAEGKDGAKLTKQEPTR), 39-53 (PEPKPRKTSAKKEPG), and 62-72 (GKKEEKQEAGK). The segment at 1–95 (MPKRKSPENA…EEVLSTNASH (95 aa)) is disordered. Ser6 carries the post-translational modification Phosphoserine. Ser78 bears the Phosphoserine mark.

The protein belongs to the HMGN family. In terms of assembly, interacts with the ligand binding domain of the thyroid receptor (TR) (in vitro). Requires the presence of thyroid hormone for its interaction. Interacts with transcriptional regulator SEHBP. Interacts with nucleosomes.

Its subcellular location is the nucleus. Binds to nucleosomes, regulating chromatin structure and consequently, chromatin-dependent processes such as transcription, DNA replication and DNA repair. Affects both insulin and glucagon levels and modulates the expression of pancreatic genes involved in insulin secretion. Regulates the expression of the glucose transporter SLC2A2 by binding specifically to its promoter region and recruiting PDX1 and additional transcription factors. Regulates the expression of SLC6A9, a glycine transporter which regulates the glycine concentration in synaptic junctions in the central nervous system, by binding to its transcription start site. May play a role in ocular development and astrocyte function. The chain is High mobility group nucleosome-binding domain-containing protein 3 (Hmgn3) from Rattus norvegicus (Rat).